A 305-amino-acid chain; its full sequence is Methionyl-tRNA formyltransferase (305 aa).

110–113 serves as a coordination point for (6S)-5,6,7,8-tetrahydrofolate; it reads SLLP.

Belongs to the Fmt family.

It carries out the reaction L-methionyl-tRNA(fMet) + (6R)-10-formyltetrahydrofolate = N-formyl-L-methionyl-tRNA(fMet) + (6S)-5,6,7,8-tetrahydrofolate + H(+). Its function is as follows. Attaches a formyl group to the free amino group of methionyl-tRNA(fMet). The formyl group appears to play a dual role in the initiator identity of N-formylmethionyl-tRNA by promoting its recognition by IF2 and preventing the misappropriation of this tRNA by the elongation apparatus. The polypeptide is Methionyl-tRNA formyltransferase (Gluconacetobacter diazotrophicus (strain ATCC 49037 / DSM 5601 / CCUG 37298 / CIP 103539 / LMG 7603 / PAl5)).